The chain runs to 748 residues: Acetyl-CoA decarbonylase/synthase complex subunit beta 1 (748 aa).

Residues cysteine 480, cysteine 483, cysteine 569, and cysteine 571 each coordinate [Ni-Fe-S] cluster.

It belongs to the CdhC family. In terms of assembly, monomer. The ACDS complex is made up of alpha, epsilon, beta, gamma and delta chains with a probable stoichiometry of (alpha(2)epsilon(2))(4)-beta(8)-(gamma(1)delta(1))(8) (Potential). It depends on [Ni-Fe-S] cluster as a cofactor.

It catalyses the reaction Co(I)-[corrinoid Fe-S protein] + acetyl-CoA + H(+) = methyl-Co(III)-[corrinoid Fe-S protein] + CO + CoA. In terms of biological role, part of a complex that catalyzes the reversible cleavage of acetyl-CoA, allowing autotrophic growth from CO(2). The alpha-epsilon complex generates CO from CO(2), while the beta subunit (this protein) combines the CO with CoA and a methyl group to form acetyl-CoA. The methyl group, which is incorporated into acetyl-CoA, is transferred to the beta subunit by a corrinoid iron-sulfur protein (the gamma-delta complex). The sequence is that of Acetyl-CoA decarbonylase/synthase complex subunit beta 1 (cdhC1) from Methanocaldococcus jannaschii (strain ATCC 43067 / DSM 2661 / JAL-1 / JCM 10045 / NBRC 100440) (Methanococcus jannaschii).